The chain runs to 203 residues: Cold-regulated 413 plasma membrane protein 2 (203 aa).

Topologically, residues 1-43 are extracellular; it reads MGRMDYLAMKTDDVDTVALVNSDMEELKVAAKKLFSDVSKLGG. A helical transmembrane segment spans residues 44 to 64; that stretch reads LGFGVSFLKFLASFAAIYLLI. The Cytoplasmic segment spans residues 65 to 74; the sequence is LDRTNWKTKM. The helical transmembrane segment at 75–95 threads the bilayer; it reads LTSLLIPYIFLSLPSVIFNFL. At 96-98 the chain is on the extracellular side; the sequence is SGD. A helical membrane pass occupies residues 99 to 119; the sequence is VGKWIAFVAVVLRLFFPKHFP. Position 120 (Asp-120) is a topological domain, cytoplasmic. The chain crosses the membrane as a helical span at residues 121–141; it reads WLEMPGSLILLLVVSPHFLAH. At 142–144 the chain is on the extracellular side; that stretch reads HIR. Residues 145 to 165 form a helical membrane-spanning segment; it reads GTWIGTVISLFIGCYLLQEHI. Topologically, residues 166–179 are cytoplasmic; it reads RASGGFRNSFTQPR. Residues 180–200 traverse the membrane as a helical segment; sequence GVSNTLGIILLLVYPVWALIV. Topologically, residues 201–203 are extracellular; sequence RVM.

It belongs to the Cold-regulated 413 protein family.

The protein localises to the cell membrane. The polypeptide is Cold-regulated 413 plasma membrane protein 2 (COR413PM2) (Arabidopsis thaliana (Mouse-ear cress)).